The chain runs to 692 residues: MTDNNQNNENHENSSENSKDHHEARAGAFERFTNRKKRFRENAQKNAESSNHETLSHHKKEHRPNKKPNNHHKPKHASQKTRNYAKEELDNNKVEGVTEILHVNERGTLGFHKELKKGVEANNKIQVEHLNPHYKMNLNSKASVKITPLGGLGEIGGNMMVIETPKSAIVIDAGMSFPKEGLFGVDILIPDFSYLHQIKDKIAGIIITHAHEDHIGATPYLFKELQFPLYGTPLSLGLIGSKFDEHGLKKYRSYFKIVEKRCPISVGEFIIEWIHITHSIIDSSALAIQTKAGTIIHTGDFKIDHTPVDNLPTDLYRLAHYGEKGVMLLLSDSTNSHKSGTTPSESTIAPAFDTLFKEAQGRVIMSTFSSNIHRVHQAIQYGIKYNRKIAVIGRSMEKNLDIARELGYIHLPYQSFIEANEVAKYPDNEVLIVTTGSQGETMSALYRMATDEHRHISIKPNDLVIISAKAIPGNEASVSAVLNFLIKKEAKVAYQEFDNIHVSGHAAQEEQKLMLRLIKPKFFLPVHGEYNHVARHKQTAIACGVPEKNIYLMEDGDQVEVGPAFIKKVGTIKSGKSYVDNQSNLSIDTSIVQQREEVASAGVFAATIFVNKNKQALLESSQFSSLGLVGFKDEKHLIKEIQGGLEVLLKSSNAEILNNPKKLEDHTRNFIRKALFKKFRKYPAIICHAHSF.

A disordered region spans residues 1 to 91 (MTDNNQNNEN…RNYAKEELDN (91 aa)). Positions 9 to 25 (ENHENSSENSKDHHEAR) are enriched in basic and acidic residues. Residues 57–79 (HHKKEHRPNKKPNNHHKPKHASQ) show a composition bias toward basic residues. 2 positions are modified to N6-acetyllysine: Lys135 and Lys141. Zn(2+) contacts are provided by His209, His211, Asp213, His214, His278, and Asp300. N6-acetyllysine is present on residues Lys324, Lys338, and Lys398. 501–505 (HVSGH) lines the substrate pocket. An N6-acetyllysine modification is found at Lys512. Position 527 (His527) interacts with Zn(2+). Residues Lys548, Lys635, and Lys650 each carry the N6-acetyllysine modification.

The protein belongs to the metallo-beta-lactamase superfamily. RNA-metabolizing metallo-beta-lactamase-like family. Bacterial RNase J subfamily. In terms of assembly, homodimer. Homotetramer; dimer of homodimers. Interacts with RNA helicase RhpA, might be a member of a minimal RNA degradosome complex. Requires Zn(2+) as cofactor. Acetylated on nine lysine residues. Some of the residues are acetylated by multiple different mechanisms. RimL is partially responsible for the acetylation of Lys-324, Lys-398 and Lys-650. HPB8_1270 homolog is partially responsible for the acetylation of Lys-324, Lys-398, Lys-512 and Lys-650. Acetyl-phosphate-mediated non-enzymatic acetylation pathway takes part in the acetylation of Lys-135, Lys-324, Lys-398, Lys-512 and Lys-650. Acetylation of the remaining residues Lys-141, Lys-338, Lys-548 and Lys-635 occurs by a yet undetermined mechanism. Acetylation on a number of these residues is important for growth regulation and proper cell morphology.

The protein resides in the cytoplasm. Catalytic activity is regulated by the balance between homodimers and homotetramers, with homotetramers being the active forms of this enzyme. Acetylation allosterically regulates the homooligomerization state and hence the catalytic activity. Functionally, an RNase that has 5'-3' exoribonuclease and endoribonuclease activity. Degrades 5'-monophosphorylated ssRNA and dsRNA, considerably more active on ssRNA. Association with RhpA significantly increases the dsRNase activity. Degrades RNA substrate with hairpin structures at both ends with low activity, but presence of RhpA significantly increases the activity on this substrate. Stimulates ATPase activity of RNA helicase RhpA. Involved in stabilization of mRNA but apparently not rRNA. The chain is Ribonuclease J from Helicobacter pylori (strain J99 / ATCC 700824) (Campylobacter pylori J99).